Here is a 157-residue protein sequence, read N- to C-terminus: Short-type peptidyl-prolyl cis-trans isomerase (157 aa).

One can recognise a PPIase FKBP-type domain in the interval 1-95 (MINLIKKGDY…RDERLIQEIP (95 aa)). Residues 86 to 137 (RDERLIQEIPKEMFADADFEPQEGMLILASGIPAKIIKVTDDTVTLDFNHEL) form an IF region.

This sequence belongs to the FKBP-type PPIase family.

The protein localises to the cytoplasm. It catalyses the reaction [protein]-peptidylproline (omega=180) = [protein]-peptidylproline (omega=0). Its function is as follows. Catalyzes the cis-trans isomerization of peptidyl prolyl bonds and accelerates protein folding. Also exhibits chaperone-like activity. In Methanocaldococcus jannaschii (strain ATCC 43067 / DSM 2661 / JAL-1 / JCM 10045 / NBRC 100440) (Methanococcus jannaschii), this protein is Short-type peptidyl-prolyl cis-trans isomerase.